We begin with the raw amino-acid sequence, 703 residues long: Polyribonucleotide nucleotidyltransferase (703 aa).

Residues Asp485 and Asp491 each contribute to the Mg(2+) site. Residues 552-611 (PRAYTINIDTDKIRTLIGTGGKTINKIIEETGVKIDIREDGTVFVLSSDADSANRALKMI) form the KH domain. One can recognise an S1 motif domain in the interval 621–689 (GEVYLGKVTK…NQGRVNLSRK (69 aa)).

It belongs to the polyribonucleotide nucleotidyltransferase family. Mg(2+) is required as a cofactor.

It is found in the cytoplasm. The enzyme catalyses RNA(n+1) + phosphate = RNA(n) + a ribonucleoside 5'-diphosphate. In terms of biological role, involved in mRNA degradation. Catalyzes the phosphorolysis of single-stranded polyribonucleotides processively in the 3'- to 5'-direction. The chain is Polyribonucleotide nucleotidyltransferase from Clostridium acetobutylicum (strain ATCC 824 / DSM 792 / JCM 1419 / IAM 19013 / LMG 5710 / NBRC 13948 / NRRL B-527 / VKM B-1787 / 2291 / W).